The sequence spans 228 residues: Heptaprenylglyceryl phosphate synthase (228 aa).

K12 provides a ligand contact to sn-glycerol 1-phosphate. D14 and S40 together coordinate Mg(2+). Residues 159 to 164 (YLEYSG), G189, and 209 to 210 (GN) contribute to the sn-glycerol 1-phosphate site.

Belongs to the GGGP/HepGP synthase family. Group I subfamily. As to quaternary structure, homodimer. The cofactor is Mg(2+).

The enzyme catalyses sn-glycerol 1-phosphate + all-trans-heptaprenyl diphosphate = 3-heptaprenyl-sn-glycero-1-phosphate + diphosphate. The protein operates within membrane lipid metabolism; glycerophospholipid metabolism. Functionally, prenyltransferase that catalyzes in vivo the transfer of the heptaprenyl moiety of heptaprenyl pyrophosphate (HepPP; 35 carbon atoms) to the C3 hydroxyl of sn-glycerol-1-phosphate (G1P), producing heptaprenylglyceryl phosphate (HepGP). This reaction is an ether-bond-formation step in the biosynthesis of archaea-type G1P-based membrane lipids found in Bacillales. This Bacillus licheniformis (strain ATCC 14580 / DSM 13 / JCM 2505 / CCUG 7422 / NBRC 12200 / NCIMB 9375 / NCTC 10341 / NRRL NRS-1264 / Gibson 46) protein is Heptaprenylglyceryl phosphate synthase.